Reading from the N-terminus, the 449-residue chain is Phosphoglucosamine mutase (449 aa).

Ser-101 functions as the Phosphoserine intermediate in the catalytic mechanism. The Mg(2+) site is built by Ser-101, Asp-243, Asp-245, and Asp-247. Ser-101 carries the phosphoserine modification.

This sequence belongs to the phosphohexose mutase family. It depends on Mg(2+) as a cofactor. Activated by phosphorylation.

It carries out the reaction alpha-D-glucosamine 1-phosphate = D-glucosamine 6-phosphate. In terms of biological role, catalyzes the conversion of glucosamine-6-phosphate to glucosamine-1-phosphate. The chain is Phosphoglucosamine mutase from Syntrophobacter fumaroxidans (strain DSM 10017 / MPOB).